The primary structure comprises 124 residues: Putative iron-sulfur cluster insertion protein ErpA (124 aa).

Iron-sulfur cluster contacts are provided by Cys52, Cys116, and Cys118.

This sequence belongs to the HesB/IscA family. As to quaternary structure, homodimer. Requires iron-sulfur cluster as cofactor.

Functionally, required for insertion of 4Fe-4S clusters. This chain is Putative iron-sulfur cluster insertion protein ErpA, found in Ralstonia pickettii (strain 12J).